An 85-amino-acid polypeptide reads, in one-letter code: Large ribosomal subunit protein bL27 (85 aa).

The segment at 1-23 is disordered; the sequence is MAHKKAGGSSRNGRDSESKRLGV.

This sequence belongs to the bacterial ribosomal protein bL27 family.

The protein is Large ribosomal subunit protein bL27 of Methylococcus capsulatus (strain ATCC 33009 / NCIMB 11132 / Bath).